We begin with the raw amino-acid sequence, 1107 residues long: Unconventional myosin-Ie (1107 aa).

Residues 19–692 (SGVDDMVLLS…SLFLLEEMRE (674 aa)) enclose the Myosin motor domain. Position 112-119 (112-119 (GESGAGKT)) interacts with ATP. The tract at residues 581-591 (PHYIRCIKPNE) is actin-binding. The region spanning 695–724 (YDGYARVIQKTWRKFVARKKYVQMREDASD) is the IQ domain. The region spanning 730 to 922 (KERRRNSINR…NKVLQVSIGP (193 aa)) is the TH1 domain. The interval 920 to 1052 (IGPGLPKNAR…KPQPKPKPQV (133 aa)) is disordered. 3 stretches are compositionally biased toward polar residues: residues 933 to 949 (RNTVSSRGYSGGTNNNY), 977 to 989 (SGNQRSNQKSLYT), and 998 to 1012 (RQQSTGSDRLSQTPE). At Ser-1001 the chain carries Phosphoserine. Pro residues predominate over residues 1034–1051 (RPPPAGGRPKPQPKPKPQ). An SH3 domain is found at 1050–1107 (PQVPQCKALYAYDAQDTDELSFNANDVIDIIKEDPSGWWTGRLRGKQGLFPNNYVTKI).

The protein belongs to the TRAFAC class myosin-kinesin ATPase superfamily. Myosin family. In terms of assembly, interacts with CALM and F-actin. Interacts (via SH3 domain) with SYNJ1, DNM1 and DNM2. Interacts with ARL14EP. Interacts with CARMIL1. Detected in brain stem, brain cortex, cerebellum, stomach, colon, heart, lung, liver, spleen and kidney. Detected in utricle, cochlea, outer hair cell bundle cuticular plate and vestibular epithelia (at protein level). Detected in cochlea and vestibular tissues. Detected in kidney, lung, spleen and intestine.

It is found in the cytoplasm. It localises to the cytoskeleton. The protein resides in the cytoplasmic vesicle. Its subcellular location is the clathrin-coated vesicle. The protein localises to the cell junction. Its function is as follows. Myosins are actin-based motor molecules with ATPase activity. Unconventional myosins serve in intracellular movements. Their highly divergent tails bind to membranous compartments, which are then moved relative to actin filaments. Binds to membranes containing anionic phospholipids via its tail domain. Involved in clathrin-mediated endocytosis and intracellular movement of clathrin-coated vesicles. Required for normal morphology of the glomerular basement membrane, normal development of foot processes by kidney podocytes and normal kidney function. In dendritic cells, may control the movement of class II-containing cytoplasmic vesicles along the actin cytoskeleton by connecting them with the actin network via ARL14EP and ARL14. In Rattus norvegicus (Rat), this protein is Unconventional myosin-Ie (Myo1e).